Reading from the N-terminus, the 413-residue chain is uncharacterized protein (413 aa).

Helical transmembrane passes span Phe42 to Phe62, Leu75 to Ser95, Leu109 to Phe129, Leu133 to Val153, Ser157 to Leu179, Ile191 to Leu211, Pro238 to Phe258, Leu265 to Leu285, Ser304 to Asn324, Ile326 to Ile346, Ala362 to Gly382, and Phe383 to Phe403.

The protein belongs to the major facilitator superfamily.

Its subcellular location is the cell membrane. This is an uncharacterized protein from Buchnera aphidicola subsp. Schizaphis graminum (strain Sg).